The primary structure comprises 404 residues: MSKVNVNKVVVAYSGGLDTSVIIPWLKENYDCEVVAFVADVGQGAEELEGIEAKAKASGASECYIADLKEEMVADYIYPTLKTGAYYEGKYLLGTSMARPIIAKAQVEVARKVGADALCHGCTGKGNDQVRFEGAFAALAPDLHVIAPWREWDLVSREQCLDYLAERNIPCSASLTKIYSRDANAWHISTEGGVLENTWNAPNEDCWVWTVDPEQAPNEAEYVTLKVEKGEVVAVDGEAMTPYNALVYLNEKGAKHGVGRIDIVENRLVGMKSRGCYETPGGTIMMEALRAVEQLVLDKSSFEFREELGLKASHLVYDGRWFTPLCKSILAASEELAQDVNGEVVVKLYKGQATVTQKRSDNSLYSEEFATFGEDEVYDQSHAGGFIRLYSLSSRIRALNSQKK.

ATP is bound by residues 12–20 and alanine 39; that span reads AYSGGLDTS. The L-citrulline site is built by tyrosine 91 and serine 96. An ATP-binding site is contributed by glycine 121. Residues threonine 123, asparagine 127, and aspartate 128 each coordinate L-aspartate. Position 127 (asparagine 127) interacts with L-citrulline. L-citrulline-binding residues include arginine 131, serine 180, serine 189, glutamate 265, and tyrosine 277.

This sequence belongs to the argininosuccinate synthase family. Type 1 subfamily. In terms of assembly, homotetramer.

The protein localises to the cytoplasm. The catalysed reaction is L-citrulline + L-aspartate + ATP = 2-(N(omega)-L-arginino)succinate + AMP + diphosphate + H(+). The protein operates within amino-acid biosynthesis; L-arginine biosynthesis; L-arginine from L-ornithine and carbamoyl phosphate: step 2/3. The protein is Argininosuccinate synthase of Vibrio parahaemolyticus serotype O3:K6 (strain RIMD 2210633).